The sequence spans 476 residues: MAALTCITCRVAFRDAELQRAHYKTDWHRYNLRRKVAAMAPVTAEGFQERVRAQRAVAEAAEASKGAATYCTACGKKFATFNAYENHLGSRRHAELERKAVRAASRRVELLNAKNLEKGLGADGVDKDAVNAAIQQAIKAQPSTSPKKAPFVPTDECGRAAAGARGVPERDPTEKPPRLQWFEQQAKKLAKQQWEDGEEEGEEEEEDDEDEDWEDIDSDDGLECEDPGVEDQDAEDAAAEESPPLGAIPITDCLFCSHHSSSLVKNVAHMTKVHSFFIPDIEYLSDLKGLIKYLGEKVGVGKICLWCNEKGKSFYSTEAVQAHMNDKSHCKLFTDGDAALEFADFYDFRSSYPDYKEGQDPAELEALSTDKILECDDETMELILPSGARVGHRSLMRYYKQRFGLPRAVTVARNQKAVGRVLQQYRALGWMGSTGAALMRERDMQYVQRMKSKWMLKIGMKNNATKQMHFRAQVRF.

A2 carries the post-translational modification N-acetylalanine. 2 U1-type zinc fingers span residues L4–H28 and T69–H93. Positions A137 to P243 are disordered. Over residues V167–P177 the composition is skewed to basic and acidic residues. The segment covering E195 to A239 has biased composition (acidic residues). At S275 the chain carries Phosphoserine.

It belongs to the REI1 family. In terms of assembly, homo- and heterodimer. Associates with pre-60S ribosomal particles. Interacts with MELK and MYBL2. Interacts with DNAJC21. Post-translationally, phosphorylated by MELK. The phosphorylation may redirect the protein to the nucleus. Ubiquitinated by HECTD1, leading to its degradation.

It localises to the cytoplasm. The protein localises to the nucleus. Its function is as follows. Pre-60S-associated cytoplasmic factor involved in the cytoplasmic maturation of the 60S subunit. In Mus musculus (Mouse), this protein is Cytoplasmic 60S subunit biogenesis factor ZNF622 (Znf622).